The following is a 419-amino-acid chain: 4-hydroxyphenylpyruvate dioxygenase (419 aa).

VOC domains lie at 41–187 (GYHH…FIQR) and 218–376 (AIDH…LFTK). 3 residues coordinate Fe cation: His221, His304, and Glu387.

This sequence belongs to the 4HPPD family. Fe cation serves as cofactor.

The catalysed reaction is 3-(4-hydroxyphenyl)pyruvate + O2 = homogentisate + CO2. Its pathway is amino-acid degradation; L-phenylalanine degradation; acetoacetate and fumarate from L-phenylalanine: step 3/6. This Zymoseptoria tritici (Speckled leaf blotch fungus) protein is 4-hydroxyphenylpyruvate dioxygenase (HPPD).